A 597-amino-acid polypeptide reads, in one-letter code: mRNA-capping enzyme (597 aa).

The interval 1 to 212 (MAYNKIPPRW…DEDGKKDSEP (212 aa)) is TPase. The Tyrosine-protein phosphatase domain occupies 25-183 (LPLKTMLGPR…FRRYGDIEEA (159 aa)). The Phosphocysteine intermediate role is filled by C126. Residues 181-221 (EEAPPPPVLPDWCFEDEDEEDEDEDGKKDSEPGSSASFSKR) form a disordered region. A compositionally biased stretch (acidic residues) spans 193-204 (CFEDEDEEDEDE). Residues 229-597 (GAIFLEGITV…PPPKRLHRPT (369 aa)) are GTase. K294 functions as the N6-GMP-lysine intermediate in the catalytic mechanism. Residues R299, R315, 343 to 345 (DGE), 458 to 460 (KWK), and 528 to 533 (RQRIDK) contribute to the GTP site. The segment at 330 to 386 (RKDLRMHLSNTLLDGEMIIDKVNGQAVPRYLIYDIIKFNAQPVGDCDFNIRLQCIER) is interaction with POLR2A. The interval 573-597 (KRKYPLDPDTELMPPPPPKRLHRPT) is disordered.

The protein in the N-terminal section; belongs to the non-receptor class of the protein-tyrosine phosphatase family. It in the C-terminal section; belongs to the eukaryotic GTase family. Interacts with SUPT5H and RNMT. Interacts with POLR2A (via C-terminus); this enhances guanylyltransferase activity. Binds (via GTase domain) to the elongating phosphorylated form of RNA polymerase II; can form direct interactions with the phosphorylated POLR2A C-terminal domain and indirect interactions via bound RNA.

It is found in the nucleus. It carries out the reaction a 5'-end triphospho-ribonucleoside in mRNA + H2O = a 5'-end diphospho-ribonucleoside in mRNA + phosphate + H(+). It catalyses the reaction a 5'-end diphospho-ribonucleoside in mRNA + GTP + H(+) = a 5'-end (5'-triphosphoguanosine)-ribonucleoside in mRNA + diphosphate. RNA triphosphatase activity is inhibited by vanadate, iodoacetate and magnesium. In terms of biological role, bifunctional mRNA-capping enzyme exhibiting RNA 5'-triphosphate monophosphatase activity in the N-terminal part and mRNA guanylyltransferase activity in the C-terminal part. Catalyzes the first two steps of cap formation: by removing the gamma-phosphate from the 5'-triphosphate end of nascent mRNA to yield a diphosphate end, and by transferring the GMP moiety of GTP to the 5'-diphosphate terminus of RNA via a covalent enzyme-GMP reaction intermediate. The chain is mRNA-capping enzyme (Rngtt) from Mus musculus (Mouse).